The sequence spans 182 residues: Protein canopy homolog 2 (182 aa).

The N-terminal stretch at 1–20 is a signal peptide; that stretch reads MKGWGWLALLLGVLLGTAWA. The region spanning 24 to 175 is the Saposin B-type domain; sequence QDLHCGACRA…KRTDLCDHAL (152 aa). 3 disulfide bridges follow: C28-C171, C31-C164, and C86-C137. S115 carries the post-translational modification Phosphoserine. The short motif at 179–182 is the Prevents secretion from ER element; it reads HDEL.

Belongs to the canopy family. In terms of assembly, interacts with MYLIP/MIR.

The protein localises to the endoplasmic reticulum. Functionally, positive regulator of neurite outgrowth by stabilizing myosin regulatory light chain (MRLC). It prevents MIR-mediated MRLC ubiquitination and its subsequent proteasomal degradation. The protein is Protein canopy homolog 2 (Cnpy2) of Mus musculus (Mouse).